A 240-amino-acid polypeptide reads, in one-letter code: tRNA pseudouridine synthase A (240 aa).

Asp-50 acts as the Nucleophile in catalysis. Tyr-109 is a substrate binding site.

This sequence belongs to the tRNA pseudouridine synthase TruA family. As to quaternary structure, homodimer.

It catalyses the reaction uridine(38/39/40) in tRNA = pseudouridine(38/39/40) in tRNA. Formation of pseudouridine at positions 38, 39 and 40 in the anticodon stem and loop of transfer RNAs. This chain is tRNA pseudouridine synthase A, found in Campylobacter jejuni (strain RM1221).